The chain runs to 415 residues: Methylaspartate ammonia-lyase 2 (415 aa).

Gln-173 provides a ligand contact to (2S,3S)-3-methyl-L-aspartate. Residues Asp-238, Glu-273, and Asp-307 each coordinate Mg(2+). Gln-329 serves as a coordination point for (2S,3S)-3-methyl-L-aspartate. Lys-331 serves as the catalytic Proton acceptor. Position 360–361 (360–361 (TC)) interacts with (2S,3S)-3-methyl-L-aspartate.

This sequence belongs to the methylaspartate ammonia-lyase family. Homodimer. It depends on Mg(2+) as a cofactor.

The catalysed reaction is (2S,3S)-3-methyl-L-aspartate = mesaconate + NH4(+). Its pathway is amino-acid degradation; L-glutamate degradation via mesaconate pathway; acetate and pyruvate from L-glutamate: step 2/4. Its function is as follows. Involved in the methylaspartate cycle. Catalyzes the formation of the alpha,beta-unsaturated bond by the reversible anti elimination of ammonia from L-threo-beta-methylaspartate (L-threo-(2S,3S)-3-methylaspartate) to give mesaconate. In Carboxydothermus hydrogenoformans (strain ATCC BAA-161 / DSM 6008 / Z-2901), this protein is Methylaspartate ammonia-lyase 2.